The following is a 265-amino-acid chain: MTIKAVIFDWAGTTIDYGSRAPIVAFQKAFANVGIQISEAEIRQDMGLDKYTHIHKIMDLPAIQNDWQARFQVLPTEDDCNQIFSNFKAILLSSLTEFGQLKPGMSAVIDYLTAHNISYGTTTGYDAEMLALVLPIAAKQGYRPAVNITSEQTGGVGRPAPAMLALAAEQLTVTDPTTVMKIGDSVNDILEGNNADAVSVGIIDGSNIMGLSELAFNALSPAEQAERRAHVTAAYQRAGADYILQSMAELPALLDQINQPVATDH.

Asp9 (nucleophile) is an active-site residue. Mg(2+) is bound by residues Asp9 and Ala11. Lys50 (schiff-base intermediate with substrate) is an active-site residue. Residue Asp184 participates in Mg(2+) binding.

This sequence belongs to the HAD-like hydrolase superfamily. PhnX family. As to quaternary structure, homodimer. The cofactor is Mg(2+).

The enzyme catalyses phosphonoacetaldehyde + H2O = acetaldehyde + phosphate + H(+). Functionally, involved in phosphonate degradation. In Lactiplantibacillus plantarum (strain ATCC BAA-793 / NCIMB 8826 / WCFS1) (Lactobacillus plantarum), this protein is Phosphonoacetaldehyde hydrolase.